The chain runs to 83 residues: Late seed maturation protein P8B6 (83 aa).

Composition is skewed to basic and acidic residues over residues 1–18 (MASQQEKKQLDERAKKGE) and 37–51 (AEGRSRGGNTRKEQL). Residues 1–83 (MASQQEKKQL…DAEDEPSTRT (83 aa)) form a disordered region. Over residues 73-83 (EDAEDEPSTRT) the composition is skewed to acidic residues.

It belongs to the small hydrophilic plant seed protein family.

The protein localises to the cytoplasm. This protein may play a role in equipping the seed for survival, maintaining a minimal level of hydration in the dry organism and preventing the denaturation of cytoplasmic components, or may play a role during imbibition by controlling water uptake. The chain is Late seed maturation protein P8B6 from Raphanus sativus (Radish).